Reading from the N-terminus, the 397-residue chain is Ribosomal RNA large subunit methyltransferase I (397 aa).

The region spanning 2 to 80 (AIRIKLKPGR…KEETIDADFF (79 aa)) is the PUA domain.

Belongs to the methyltransferase superfamily. RlmI family.

The protein localises to the cytoplasm. The enzyme catalyses cytidine(1962) in 23S rRNA + S-adenosyl-L-methionine = 5-methylcytidine(1962) in 23S rRNA + S-adenosyl-L-homocysteine + H(+). Functionally, specifically methylates the cytosine at position 1962 (m5C1962) of 23S rRNA. This chain is Ribosomal RNA large subunit methyltransferase I, found in Shewanella frigidimarina (strain NCIMB 400).